The following is a 147-amino-acid chain: Hemoglobin subunit beta (147 aa).

In terms of domain architecture, Globin spans 2–147 (EWTDAERSAI…VVSALCRQYH (146 aa)). Heme b-binding residues include H63 and H92.

The protein belongs to the globin family. In terms of assembly, heterotetramer of two alpha chains and two beta chains. Red blood cells.

In terms of biological role, involved in oxygen transport from gills to the various peripheral tissues. The protein is Hemoglobin subunit beta (hbb) of Carassius auratus (Goldfish).